The chain runs to 128 residues: Small ribosomal subunit protein uS11 (128 aa).

This sequence belongs to the universal ribosomal protein uS11 family. Part of the 30S ribosomal subunit. Interacts with proteins S7 and S18. Binds to IF-3.

Its function is as follows. Located on the platform of the 30S subunit, it bridges several disparate RNA helices of the 16S rRNA. Forms part of the Shine-Dalgarno cleft in the 70S ribosome. In Porphyromonas gingivalis (strain ATCC BAA-308 / W83), this protein is Small ribosomal subunit protein uS11.